Reading from the N-terminus, the 138-residue chain is Small ribosomal subunit protein uS11c (138 aa).

The tract at residues 1 to 23 (MKKPIPRIGSRRNGRIGSRKNGR) is disordered.

This sequence belongs to the universal ribosomal protein uS11 family. Part of the 30S ribosomal subunit.

Its subcellular location is the plastid. The protein localises to the chloroplast. The chain is Small ribosomal subunit protein uS11c from Amborella trichopoda.